The following is a 353-amino-acid chain: E3 ubiquitin-protein ligase Os03g0188200 (353 aa).

The helical transmembrane segment at 48–68 threads the bilayer; that stretch reads VVVLVALITAFVLLTVFSVLI. The segment at 133–175 adopts an RING-type; atypical zinc-finger fold; the sequence is CAVCLAEFADSDELRVLPACCHVFHPDCIDPWLAAAVTCPLCR. Basic and acidic residues-rich tracts occupy residues 308–318 and 340–353; these read ADWDAGEEHGG and GSKE…LNRV. Positions 308 to 353 are disordered; it reads ADWDAGEEHGGSKRVHPVAGAQDETPSGSGSDGSKENSDSDALNRV.

It is found in the membrane. It catalyses the reaction S-ubiquitinyl-[E2 ubiquitin-conjugating enzyme]-L-cysteine + [acceptor protein]-L-lysine = [E2 ubiquitin-conjugating enzyme]-L-cysteine + N(6)-ubiquitinyl-[acceptor protein]-L-lysine.. It participates in protein modification; protein ubiquitination. Its function is as follows. Possesses E3 ubiquitin-protein ligase in vitro. This is E3 ubiquitin-protein ligase Os03g0188200 from Oryza sativa subsp. japonica (Rice).